The sequence spans 194 residues: Threonylcarbamoyl-AMP synthase (194 aa).

Positions 12-194 (SPNMKDLLIQ…DVMTGKLIRE (183 aa)) constitute a YrdC-like domain.

The protein belongs to the SUA5 family. TsaC subfamily.

The protein resides in the cytoplasm. The enzyme catalyses L-threonine + hydrogencarbonate + ATP = L-threonylcarbamoyladenylate + diphosphate + H2O. Its function is as follows. Required for the formation of a threonylcarbamoyl group on adenosine at position 37 (t(6)A37) in tRNAs that read codons beginning with adenine. Catalyzes the conversion of L-threonine, HCO(3)(-)/CO(2) and ATP to give threonylcarbamoyl-AMP (TC-AMP) as the acyladenylate intermediate, with the release of diphosphate. This Blochmanniella pennsylvanica (strain BPEN) protein is Threonylcarbamoyl-AMP synthase.